Reading from the N-terminus, the 148-residue chain is Hemoglobin subunit beta-B (148 aa).

The Globin domain maps to 3 to 148 (DWTDAERAAI…VVSALGRQYH (146 aa)). Heme b-binding residues include His-64 and His-93.

It belongs to the globin family. Heterotetramer of two alpha chains and two beta chains. As to expression, red blood cells.

Involved in oxygen transport from gills to the various peripheral tissues. This chain is Hemoglobin subunit beta-B (hbb2), found in Seriola quinqueradiata (Five-ray yellowtail).